A 171-amino-acid polypeptide reads, in one-letter code: Co-chaperone protein HscB (171 aa).

The J domain maps to 2–74 (DYFTLFGLPA…LTRAEYLLSL (73 aa)).

This sequence belongs to the HscB family. Interacts with HscA and stimulates its ATPase activity. Interacts with IscU.

Functionally, co-chaperone involved in the maturation of iron-sulfur cluster-containing proteins. Seems to help targeting proteins to be folded toward HscA. The sequence is that of Co-chaperone protein HscB from Salmonella arizonae (strain ATCC BAA-731 / CDC346-86 / RSK2980).